Reading from the N-terminus, the 482-residue chain is Spore germination protein A1 (482 aa).

6 helical membrane-spanning segments follow: residues 242–262 (VAIL…LGIL), 284–304 (FASI…VSFH), 321–341 (ENVP…IELL), 351–371 (PLGQ…AVEA), 373–393 (LVSS…FTVP), and 406–426 (FISM…FMLV).

This sequence belongs to the GerABKA family.

The protein resides in the cell membrane. Its function is as follows. Forms a complex at the inner spore membrane which acts as a receptor for L-alanine, thus is involved in the stimulation of germination in response to alanine. Can stimulate germination in the absence of GerD and GerK gene products (fructose and glucose receptors, respectively), but the response is improved in their presence. The polypeptide is Spore germination protein A1 (gerAA) (Bacillus subtilis (strain 168)).